A 901-amino-acid chain; its full sequence is Protein translocase subunit SecA (901 aa).

ATP-binding positions include glutamine 85, 103 to 107, and aspartate 510; that span reads GEGKT. A disordered region spans residues 848 to 901; the sequence is RINQNNLPVDENSQTTQNSETEDYSDRRIGRNEPCPCGSGKKYKHCHGSRVARQ. A compositionally biased stretch (polar residues) spans 849 to 866; sequence INQNNLPVDENSQTTQNS. Positions 882, 884, 893, and 894 each coordinate Zn(2+). The segment covering 888 to 901 has biased composition (basic residues); the sequence is KKYKHCHGSRVARQ.

This sequence belongs to the SecA family. Monomer and homodimer. Part of the essential Sec protein translocation apparatus which comprises SecA, SecYEG and auxiliary proteins SecDF-YajC and YidC. The cofactor is Zn(2+).

It is found in the cell inner membrane. The protein resides in the cytoplasm. It carries out the reaction ATP + H2O + cellular proteinSide 1 = ADP + phosphate + cellular proteinSide 2.. Part of the Sec protein translocase complex. Interacts with the SecYEG preprotein conducting channel. Has a central role in coupling the hydrolysis of ATP to the transfer of proteins into and across the cell membrane, serving both as a receptor for the preprotein-SecB complex and as an ATP-driven molecular motor driving the stepwise translocation of polypeptide chains across the membrane. The sequence is that of Protein translocase subunit SecA from Haemophilus influenzae (strain 86-028NP).